The sequence spans 201 residues: uncharacterized protein (201 aa).

A signal peptide spans 1–19; sequence MKLIVSVFLIGCQFLNILG.

This is an uncharacterized protein from Acheta domesticus (House cricket).